The primary structure comprises 158 residues: UPAR/Ly6 domain-containing protein crim (158 aa).

Positions 1 to 22 (MHYHTNLIAALLLAALIHEGSA) are cleaved as a signal peptide. Over 23-136 (IWCYRCTSAT…FCFLDHRCNG (114 aa)) the chain is Extracellular. Asparagine 107 carries an N-linked (GlcNAc...) asparagine glycan. Asparagine 135 carries GPI-anchor amidated asparagine lipidation. The propeptide at 136–158 (GASGLQTSAVIGLLTLIPALLLR) is removed in mature form. A helical transmembrane segment spans residues 137–157 (ASGLQTSAVIGLLTLIPALLL). Residue arginine 158 is a topological domain, cytoplasmic.

The protein belongs to the quiver family.

Its subcellular location is the membrane. Functionally, required for septate junction assembly possibly by organizing the preassembly and transport of septate junction proteins. Involved in epithelial cell septate junction-mediated paracellular barrier functions of trachea, hindgut and salivary gland. The sequence is that of UPAR/Ly6 domain-containing protein crim from Drosophila melanogaster (Fruit fly).